Consider the following 317-residue polypeptide: Acetyl-coenzyme A carboxylase carboxyl transferase subunit alpha (317 aa).

Positions 40–293 constitute a CoA carboxyltransferase C-terminal domain; that stretch reads LEVRVREAIL…GDVIANALAE (254 aa).

It belongs to the AccA family. Acetyl-CoA carboxylase is a heterohexamer composed of biotin carboxyl carrier protein (AccB), biotin carboxylase (AccC) and two subunits each of ACCase subunit alpha (AccA) and ACCase subunit beta (AccD).

Its subcellular location is the cytoplasm. It carries out the reaction N(6)-carboxybiotinyl-L-lysyl-[protein] + acetyl-CoA = N(6)-biotinyl-L-lysyl-[protein] + malonyl-CoA. Its pathway is lipid metabolism; malonyl-CoA biosynthesis; malonyl-CoA from acetyl-CoA: step 1/1. In terms of biological role, component of the acetyl coenzyme A carboxylase (ACC) complex. First, biotin carboxylase catalyzes the carboxylation of biotin on its carrier protein (BCCP) and then the CO(2) group is transferred by the carboxyltransferase to acetyl-CoA to form malonyl-CoA. The protein is Acetyl-coenzyme A carboxylase carboxyl transferase subunit alpha of Rhizobium etli (strain CIAT 652).